Consider the following 80-residue polypeptide: Protein FAM229B (80 aa).

A disordered region spans residues 1-45; the sequence is MPFRFGTQPRRFPVEGGDSSIELESGLSSSASCNGKETSPNRQLR. The span at 15–32 shows a compositional bias: low complexity; that stretch reads EGGDSSIELESGLSSSAS. The segment covering 33 to 42 has biased composition (polar residues); that stretch reads CNGKETSPNR.

This sequence belongs to the FAM229 family.

This Rattus norvegicus (Rat) protein is Protein FAM229B (Fam229b).